The primary structure comprises 195 residues: Imidazoleglycerol-phosphate dehydratase (195 aa).

Belongs to the imidazoleglycerol-phosphate dehydratase family.

It localises to the cytoplasm. It catalyses the reaction D-erythro-1-(imidazol-4-yl)glycerol 3-phosphate = 3-(imidazol-4-yl)-2-oxopropyl phosphate + H2O. It functions in the pathway amino-acid biosynthesis; L-histidine biosynthesis; L-histidine from 5-phospho-alpha-D-ribose 1-diphosphate: step 6/9. In Frankia casuarinae (strain DSM 45818 / CECT 9043 / HFP020203 / CcI3), this protein is Imidazoleglycerol-phosphate dehydratase.